The chain runs to 196 residues: Chloroplastic ATP-dependent Clp protease proteolytic subunit 1 (196 aa).

Residue serine 101 is the Nucleophile of the active site. Residue histidine 126 is part of the active site.

It belongs to the peptidase S14 family. As to quaternary structure, component of the chloroplastic Clp protease core complex which consist of at least 16 proteins: CLPP4 (3 copies), CLPP5 (3 copies), CLPR4 (2 copies), ClpP1 (1 copy), CLPP6 (1 copy), CLPR2 (1 copy), CLPT1 (1 copy), CLPT2 (1 copy) and 3 copies of CLPP3 and/or CLPR1 and/or CLPR3. The core complex is organized in two heptameric rings, one containing CLPP3,4,5,6 in a 1:2:3:1 ratio and the other CLPP1 and CLPR1,2,3,4 in a 3:1:1:1:1 ratio. In terms of tissue distribution, mostly expressed in leaves. Also detected in stems, and to a lower extent, in roots (at protein level).

The protein resides in the plastid. The protein localises to the chloroplast stroma. It catalyses the reaction Hydrolysis of proteins to small peptides in the presence of ATP and magnesium. alpha-casein is the usual test substrate. In the absence of ATP, only oligopeptides shorter than five residues are hydrolyzed (such as succinyl-Leu-Tyr-|-NHMec, and Leu-Tyr-Leu-|-Tyr-Trp, in which cleavage of the -Tyr-|-Leu- and -Tyr-|-Trp bonds also occurs).. Functionally, cleaves peptides in various proteins in a process that requires ATP hydrolysis. Has a chymotrypsin-like activity. Plays a major role in the degradation of misfolded proteins. The protein is Chloroplastic ATP-dependent Clp protease proteolytic subunit 1 of Arabidopsis thaliana (Mouse-ear cress).